A 355-amino-acid chain; its full sequence is uncharacterized protein (355 aa).

The first 27 residues, 1–27 (MESPIRTARRTLPLLIGATCLVLALTG), serve as a signal peptide directing secretion. Cysteine 28 is lipidated: N-palmitoyl cysteine. Residue cysteine 28 is the site of S-diacylglycerol cysteine attachment. The interval 33 to 53 (GPAQARPTPSASTSPKQAPAL) is disordered. A compositionally biased stretch (polar residues) spans 39-48 (PTPSASTSPK).

It is found in the cell membrane. This is an uncharacterized protein from Streptomyces coelicolor (strain ATCC BAA-471 / A3(2) / M145).